The primary structure comprises 408 residues: Aminoacylase-1B (408 aa).

Zn(2+) is bound at residue H80. D82 is an active-site residue. Residue D113 coordinates Zn(2+). E147 functions as the Proton acceptor in the catalytic mechanism. Zn(2+) is bound by residues E148, E175, and H373. Phosphoserine is present on S408.

This sequence belongs to the peptidase M20A family. Homodimer. It depends on Zn(2+) as a cofactor. As to expression, expressed in kidney.

Its subcellular location is the cytoplasm. The enzyme catalyses an N-acyl-L-amino acid + H2O = an L-alpha-amino acid + a carboxylate. The catalysed reaction is an N-acetyl-L-cysteine-S-conjugate + H2O = an S-substituted L-cysteine + acetate. In terms of biological role, involved in the hydrolysis of N-acylated or N-acetylated amino acids (except L-aspartate). In Rattus norvegicus (Rat), this protein is Aminoacylase-1B (Acy1b).